A 504-amino-acid chain; its full sequence is Dolichol kinase sec59 (504 aa).

The Cytoplasmic segment spans residues 1–55 (MYIMSKKCYDTSEKIDREQECVEVNYQHRNFESILEIFSVLFIPFLCNSGKKFLQ). The helical transmembrane segment at 56–76 (ISNASFFLPACFYLLGSSSII) threads the bilayer. Residue glutamine 77 is a topological domain, lumenal. A helical transmembrane segment spans residues 78–98 (LYEPLLWLSSFPFCILYVGFG). Topologically, residues 99–157 (ENSVLYHEMYTVCLYNALLSLTQRWKWLSIVLDGLGNSSVNLKLHETVILAFLEITQNS) are cytoplasmic. Residues 158 to 178 (FTFIEGILICTGLTGLCFATF) form a helical membrane-spanning segment. The Lumenal segment spans residues 179-187 (SYEVSPVVS). A helical membrane pass occupies residues 188-208 (VLSGVLLISLPTLILLNLCIL). Over 209 to 215 (KLAAKLH) the chain is Cytoplasmic. Residues 216–236 (LSALFTTCLIYFFSALLVFLV) traverse the membrane as a helical segment. Over 237–263 (SRSWVAGQLGQAPEVWLFNQIFSHRNS) the chain is Lumenal. The helical transmembrane segment at 264–284 (LTRIKIIIWWIICLGCFIFIL) threads the bilayer. The Cytoplasmic portion of the chain corresponds to 285–325 (LRSNRNNPLGKYFTTEDEVLNFRRKTYHALVVFLFLPVCCL). The helical transmembrane segment at 326-347 (DPHFLHLSFSGVLFIFLFVEGI) threads the bilayer. The Lumenal segment spans residues 348-373 (RILRLKPFGKMIHEFLWEYTDNRDHK). Residues 374–394 (GPLIISHIYLLIGCAIPIWLS) form a helical membrane-spanning segment. Residues 395–403 (NALKGPVAS) are Cytoplasmic-facing. The chain crosses the membrane as a helical span at residues 404–424 (VELLVGVLCLGCGDSMASIIG). Over 425 to 440 (KRFGKHRISKTNKSIE) the chain is Lumenal. The helical transmembrane segment at 441–461 (GVFAFSISVFLVLHLTQAFHV) threads the bilayer. A topological domain (cytoplasmic) is located at residue cysteine 462. The chain crosses the membrane as a helical span at residues 463-483 (PSVTFWKTLFMSLCTAILEGV). Residues 484–504 (STENDNLILPMYMWVLYQALD) lie on the Lumenal side of the membrane.

This sequence belongs to the polyprenol kinase family.

The protein localises to the endoplasmic reticulum membrane. The catalysed reaction is a di-trans,poly-cis-dolichol + CTP = a di-trans,poly-cis-dolichyl phosphate + CDP + H(+). The protein operates within protein modification; protein glycosylation. Its function is as follows. Catalyzes CTP-mediated phosphorylation of dolichol, the terminal step in de novo dolichyl monophosphate (Dol-P) biosynthesis. Dol-P is a lipid carrier essential for the synthesis of N-linked and O-linked oligosaccharides and for GPI anchors. In Schizosaccharomyces pombe (strain 972 / ATCC 24843) (Fission yeast), this protein is Dolichol kinase sec59.